We begin with the raw amino-acid sequence, 32 residues long: U3-ctenitoxin-Pk1a (32 aa).

3 cysteine pairs are disulfide-bonded: C3–C17, C10–C21, and C16–C30.

Belongs to the neurotoxin 17 (21C2) family. As to expression, expressed by the venom gland.

The protein localises to the secreted. Its function is as follows. May act as a neurotoxin. The polypeptide is U3-ctenitoxin-Pk1a (Phoneutria keyserlingi (Brazilian wandering spider)).